The primary structure comprises 969 residues: Activity-dependent neuroprotective protein a (969 aa).

Residues 74-97 (FCCSDCPFASKYFSAYKNHFRNVH) form a C2H2-type 1 zinc finger. The segment at 107–129 (LNCSYCTYSGNKRTLETHVRLFH) adopts a C2H2-type 2; atypical zinc-finger fold. 2 C2H2-type zinc fingers span residues 169–192 (YYCK…YREH) and 221–244 (IHCK…IEFH). Residues 401-423 (KICTICNELFPESAYSAHFEKEH) form a C2H2-type 5; atypical zinc finger. The segment at 443 to 464 (SKCLYCNRYLPSDSLLNHMLVH) adopts a C2H2-type 6; atypical zinc-finger fold. The C2H2-type 7 zinc-finger motif lies at 466–489 (LSCPHCHSTFHEVEKIVAHNRLAH). The segment at 583–608 (TLCPLCFTILKGPISDALAHHLRDSH) adopts a C2H2-type 8; atypical zinc-finger fold. A C2H2-type 9; atypical zinc finger spans residues 623-647 (YKCIHCLGVYTSNMTASTITLHLVH). The disordered stretch occupies residues 659-689 (KPITTGLRSPGAGSLKRELVTPDPSDPKRRK). Positions 732 to 774 (AYFNRHPYPSQREVEKLAASLWLWKSDVASHFGNHRRLCDRDF) form a DNA-binding region, homeobox. Positions 911–949 (DVRANRSSPRVGPKVLDGSVSSSSPDEATWSGNMSSEES) are disordered. Residues 929 to 946 (SVSSSSPDEATWSGNMSS) show a composition bias toward polar residues.

Interacts with catenin beta-1/ctnnb1.

Its subcellular location is the nucleus. Functionally, may be involved in transcriptional regulation. Positively modulates wnt-beta-catenin/ctnnb1 signaling. Required for embryonic neurogenesis. Required for progression through late erythroid differentiation. This is Activity-dependent neuroprotective protein a from Danio rerio (Zebrafish).